The primary structure comprises 340 residues: HPr kinase/phosphorylase (340 aa).

Residues His-153 and Lys-174 contribute to the active site. 168-175 contacts ATP; the sequence is GNSGLGKS. Ser-175 provides a ligand contact to Mg(2+). Asp-192 functions as the Proton acceptor; for phosphorylation activity. Proton donor; for dephosphorylation activity in the catalytic mechanism. An important for the catalytic mechanism of both phosphorylation and dephosphorylation region spans residues 216-225; that stretch reads MEIRGLGVVD. A Mg(2+)-binding site is contributed by Glu-217. Arg-258 is an active-site residue. Residues 279–284 are important for the catalytic mechanism of dephosphorylation; the sequence is PINPGK.

This sequence belongs to the HPrK/P family. Homohexamer. Requires Mg(2+) as cofactor.

The catalysed reaction is [HPr protein]-L-serine + ATP = [HPr protein]-O-phospho-L-serine + ADP + H(+). It catalyses the reaction [HPr protein]-O-phospho-L-serine + phosphate + H(+) = [HPr protein]-L-serine + diphosphate. In terms of biological role, catalyzes the ATP- as well as the pyrophosphate-dependent phosphorylation of a specific serine residue in HPr, a phosphocarrier protein of the phosphoenolpyruvate-dependent sugar phosphotransferase system (PTS). HprK/P also catalyzes the pyrophosphate-producing, inorganic phosphate-dependent dephosphorylation (phosphorolysis) of seryl-phosphorylated HPr (P-Ser-HPr). The sequence is that of HPr kinase/phosphorylase from Prosthecochloris aestuarii (strain DSM 271 / SK 413).